Consider the following 60-residue polypeptide: Probable tautomerase SAG1079 (60 aa).

P2 (proton acceptor; via imino nitrogen) is an active-site residue.

Belongs to the 4-oxalocrotonate tautomerase family.

In Streptococcus agalactiae serotype V (strain ATCC BAA-611 / 2603 V/R), this protein is Probable tautomerase SAG1079.